Here is a 432-residue protein sequence, read N- to C-terminus: D-amino acid dehydrogenase (432 aa).

3 to 17 is an FAD binding site; the sequence is VLVLGSGVIGTTTAY.

The protein belongs to the DadA oxidoreductase family. The cofactor is FAD.

It catalyses the reaction a D-alpha-amino acid + A + H2O = a 2-oxocarboxylate + AH2 + NH4(+). The protein operates within amino-acid degradation; D-alanine degradation; NH(3) and pyruvate from D-alanine: step 1/1. In terms of biological role, oxidative deamination of D-amino acids. This chain is D-amino acid dehydrogenase, found in Azotobacter vinelandii (strain DJ / ATCC BAA-1303).